A 736-amino-acid chain; its full sequence is Phosphoribosylformylglycinamidine synthase subunit PurL (736 aa).

H50 is an active-site residue. The ATP site is built by Y53 and K92. E94 contacts Mg(2+). Residues S95–H98 and R117 contribute to the substrate site. The active-site Proton acceptor is H96. D118 provides a ligand contact to Mg(2+). Position 241 (Q241) interacts with substrate. D269 contributes to the Mg(2+) binding site. Substrate is bound at residue E313–Q315. Residues D495 and G532 each contribute to the ATP site. N533 contacts Mg(2+). S535 is a substrate binding site.

Belongs to the FGAMS family. As to quaternary structure, monomer. Part of the FGAM synthase complex composed of 1 PurL, 1 PurQ and 2 PurS subunits.

It localises to the cytoplasm. The catalysed reaction is N(2)-formyl-N(1)-(5-phospho-beta-D-ribosyl)glycinamide + L-glutamine + ATP + H2O = 2-formamido-N(1)-(5-O-phospho-beta-D-ribosyl)acetamidine + L-glutamate + ADP + phosphate + H(+). Its pathway is purine metabolism; IMP biosynthesis via de novo pathway; 5-amino-1-(5-phospho-D-ribosyl)imidazole from N(2)-formyl-N(1)-(5-phospho-D-ribosyl)glycinamide: step 1/2. Part of the phosphoribosylformylglycinamidine synthase complex involved in the purines biosynthetic pathway. Catalyzes the ATP-dependent conversion of formylglycinamide ribonucleotide (FGAR) and glutamine to yield formylglycinamidine ribonucleotide (FGAM) and glutamate. The FGAM synthase complex is composed of three subunits. PurQ produces an ammonia molecule by converting glutamine to glutamate. PurL transfers the ammonia molecule to FGAR to form FGAM in an ATP-dependent manner. PurS interacts with PurQ and PurL and is thought to assist in the transfer of the ammonia molecule from PurQ to PurL. This chain is Phosphoribosylformylglycinamidine synthase subunit PurL, found in Bartonella tribocorum (strain CIP 105476 / IBS 506).